A 575-amino-acid chain; its full sequence is Major outer membrane protein MspA (575 aa).

Residues 1–19 form the signal peptide; the sequence is MKKALVFFVALAMIGSVFA.

Its subcellular location is the cell outer membrane. Its function is as follows. Major component of the outer membrane sheath. This is Major outer membrane protein MspA (mspA) from Treponema maltophilum.